Consider the following 251-residue polypeptide: Hydroxyacylglutathione hydrolase (251 aa).

Positions 53, 55, 57, 58, 110, 127, and 165 each coordinate Zn(2+).

Belongs to the metallo-beta-lactamase superfamily. Glyoxalase II family. As to quaternary structure, monomer. It depends on Zn(2+) as a cofactor.

The enzyme catalyses an S-(2-hydroxyacyl)glutathione + H2O = a 2-hydroxy carboxylate + glutathione + H(+). It participates in secondary metabolite metabolism; methylglyoxal degradation; (R)-lactate from methylglyoxal: step 2/2. Its function is as follows. Thiolesterase that catalyzes the hydrolysis of S-D-lactoyl-glutathione to form glutathione and D-lactic acid. The protein is Hydroxyacylglutathione hydrolase of Yersinia pestis (strain Pestoides F).